We begin with the raw amino-acid sequence, 177 residues long: Large ribosomal subunit protein uL6 (177 aa).

This sequence belongs to the universal ribosomal protein uL6 family. As to quaternary structure, part of the 50S ribosomal subunit.

This protein binds to the 23S rRNA, and is important in its secondary structure. It is located near the subunit interface in the base of the L7/L12 stalk, and near the tRNA binding site of the peptidyltransferase center. The sequence is that of Large ribosomal subunit protein uL6 from Vibrio vulnificus (strain CMCP6).